We begin with the raw amino-acid sequence, 236 residues long: tRNA (guanine-N(7)-)-methyltransferase (236 aa).

Positions 35, 60, 87, and 113 each coordinate S-adenosyl-L-methionine. The active site involves Asp113. Substrate is bound by residues Lys117 and Asp149.

This sequence belongs to the class I-like SAM-binding methyltransferase superfamily. TrmB family.

The catalysed reaction is guanosine(46) in tRNA + S-adenosyl-L-methionine = N(7)-methylguanosine(46) in tRNA + S-adenosyl-L-homocysteine. It participates in tRNA modification; N(7)-methylguanine-tRNA biosynthesis. In terms of biological role, catalyzes the formation of N(7)-methylguanine at position 46 (m7G46) in tRNA. This is tRNA (guanine-N(7)-)-methyltransferase from Parasynechococcus marenigrum (strain WH8102).